The chain runs to 438 residues: Aspartate--tRNA(Asp/Asn) ligase (438 aa).

Glu-176 is an L-aspartate binding site. An aspartate region spans residues 198–201 (QLYK). Residue Arg-220 coordinates L-aspartate. ATP contacts are provided by residues 220-222 (RAE), 228-230 (RHL), and Glu-361. 2 residues coordinate Mg(2+): Glu-361 and Ser-364. The L-aspartate site is built by Ser-364 and Arg-368. 409–412 (GADR) contacts ATP.

It belongs to the class-II aminoacyl-tRNA synthetase family. Type 2 subfamily. Homodimer. The cofactor is Mg(2+).

The protein resides in the cytoplasm. It catalyses the reaction tRNA(Asx) + L-aspartate + ATP = L-aspartyl-tRNA(Asx) + AMP + diphosphate. Its function is as follows. Aspartyl-tRNA synthetase with relaxed tRNA specificity since it is able to aspartylate not only its cognate tRNA(Asp) but also tRNA(Asn). Reaction proceeds in two steps: L-aspartate is first activated by ATP to form Asp-AMP and then transferred to the acceptor end of tRNA(Asp/Asn). The sequence is that of Aspartate--tRNA(Asp/Asn) ligase from Methanocaldococcus jannaschii (strain ATCC 43067 / DSM 2661 / JAL-1 / JCM 10045 / NBRC 100440) (Methanococcus jannaschii).